The primary structure comprises 735 residues: MAAGGAVAAAPECRLLPYALHKWSSFSSTYLPENILVDKPNDQSSRWSSESNYPPQYLILKLERPAIVQNITFGKYEKTHVCNLKKFKVFGGMNEENMTELLSSGLKNDYNKETFTLKHKIDEQMFPCRFIKIVPLLSWGPSFNFSIWYVELSGIDDPDIVQPCLNWYSKYREQEAIRLCLKHFRQHNYTEAFESLQKKTKIALEHPMLTDIHDKLVLKGDFDACEELIEKAVNDGLFNQYISQQEYKPRWSQIIPKSTKGDGEDNRPGMRGGHQMVIDVQTETVYLFGGWDGTQDLADFWAYSVKENQWTCISRDTEKENGPSARSCHKMCIDIQRRQIYTLGRYLDSSVRNSKSLKSDFYRYDIDTNTWMLLSEDTAADGGPKLVFDHQMCMDSEKHMIYTFGGRILTCNGSVDDSRASEPQFSGLFAFNCQCQTWKLLREDSCNAGPEDIQSRIGHCMLFHSKNRCLYVFGGQRSKTYLNDFFSYDVDSDHVDIISDGTKKDSGMVPMTGFTQRATIDPELNEIHVLSGLSKDKEKREENVRNSFWIYDIVRNSWSCVYKNDQAAKDNPTKSLQEEEPCPRFAHQLVYDELHKVHYLFGGNPGKSCSPKMRLDDFWSLKLCRPSKDYLLRHCKYLIRKHRFEEKAQMDPLSALKYLQNDLYITVDHSDPEETKEFQLLASALFKSGSDFTALGFSDVDHTYAQRTQLFDTLVNFFPDSMTPPKGNLVDLITL.

Ala2 bears the N-acetylalanine mark. The 33-residue stretch at 172-204 (REQEAIRLCLKHFRQHNYTEAFESLQKKTKIAL) folds into the LisH domain. The CTLH domain occupies 206–258 (HPMLTDIHDKLVLKGDFDACEELIEKAVNDGLFNQYISQQEYKPRWSQIIPKS). Kelch repeat units lie at residues 284–330 (TVYL…SCHK), 339–391 (QIYT…FDHQ), 408–458 (ILTC…SRIG), 469–515 (CLYV…TGFT), 526–578 (EIHV…SLQE), and 597–651 (VHYL…AQMD).

Homodimer; may form higher oligomers. Identified in the CTLH complex that contains GID4, RANBP9 and/or RANBP10, MKLN1, MAEA, RMND5A (or alternatively its paralog RMND5B), GID8, ARMC8, WDR26 and YPEL5. Within this complex, MAEA, RMND5A (or alternatively its paralog RMND5B), GID8, WDR26, and RANBP9 and/or RANBP10 form the catalytic core, while GID4, MKLN1, ARMC8 and YPEL5 have ancillary roles. Interacts with RANBP9. Part of a complex consisting of RANBP9, MKLN1 and GID8. Interacts with GABRA1. Interacts with the C-terminal tail of PTGER3.

The protein localises to the cytoplasm. It localises to the cytosol. The protein resides in the nucleus. It is found in the nucleoplasm. Its subcellular location is the cell projection. The protein localises to the ruffle. It localises to the cell cortex. The protein resides in the synapse. It is found in the postsynapse. Its function is as follows. Component of the CTLH E3 ubiquitin-protein ligase complex that selectively accepts ubiquitin from UBE2H and mediates ubiquitination and subsequent proteasomal degradation of the transcription factor HBP1. Required for internalization of the GABA receptor GABRA1 from the cell membrane via endosomes and subsequent GABRA1 degradation. Acts as a mediator of cell spreading and cytoskeletal responses to the extracellular matrix component THBS1. The sequence is that of Muskelin (MKLN1) from Pongo abelii (Sumatran orangutan).